The sequence spans 212 residues: Nitrogen regulatory protein P-II homolog (212 aa).

3 stretches are compositionally biased toward low complexity: residues 1-12 (MSSPATAAAAAA), 32-46 (TTTT…SRSR), and 63-74 (PPTAARAQSAAA). The transit peptide at 1 to 68 (MSSPATAAAA…PRRLPPTAAR (68 aa)) directs the protein to the chloroplast. Positions 1–74 (MSSPATAAAA…TAARAQSAAA (74 aa)) are disordered. ATP-binding positions include 117 to 121 (GFGAQ) and 170 to 173 (GDGK). Residue G119 participates in Mg(2+) binding.

The protein belongs to the P(II) protein family. Homodimer.

Its subcellular location is the plastid. It is found in the chloroplast. Participates in sensing carbon and organic nitrogen status and regulates some steps of primary carbon and nitrogen metabolism. This is Nitrogen regulatory protein P-II homolog (GLB) from Oryza sativa subsp. japonica (Rice).